Reading from the N-terminus, the 190-residue chain is Peptidyl-tRNA hydrolase (190 aa).

Y14 provides a ligand contact to tRNA. H19 acts as the Proton acceptor in catalysis. The tRNA site is built by Y64, N66, and N112.

The protein belongs to the PTH family. As to quaternary structure, monomer.

The protein localises to the cytoplasm. It catalyses the reaction an N-acyl-L-alpha-aminoacyl-tRNA + H2O = an N-acyl-L-amino acid + a tRNA + H(+). Functionally, hydrolyzes ribosome-free peptidyl-tRNAs (with 1 or more amino acids incorporated), which drop off the ribosome during protein synthesis, or as a result of ribosome stalling. Catalyzes the release of premature peptidyl moieties from peptidyl-tRNA molecules trapped in stalled 50S ribosomal subunits, and thus maintains levels of free tRNAs and 50S ribosomes. This is Peptidyl-tRNA hydrolase from Chlorobium chlorochromatii (strain CaD3).